The primary structure comprises 125 residues: Holo-[acyl-carrier-protein] synthase (125 aa).

Residues Asp-8 and Glu-57 each coordinate Mg(2+).

Belongs to the P-Pant transferase superfamily. AcpS family. The cofactor is Mg(2+).

It is found in the cytoplasm. It carries out the reaction apo-[ACP] + CoA = holo-[ACP] + adenosine 3',5'-bisphosphate + H(+). Transfers the 4'-phosphopantetheine moiety from coenzyme A to a Ser of acyl-carrier-protein. In Blochmanniella floridana, this protein is Holo-[acyl-carrier-protein] synthase.